We begin with the raw amino-acid sequence, 403 residues long: Phosphopentomutase (403 aa).

The Mn(2+) site is built by Asp-13, Asp-298, His-303, Asp-339, His-340, and His-351.

It belongs to the phosphopentomutase family. Mn(2+) serves as cofactor.

It is found in the cytoplasm. The enzyme catalyses 2-deoxy-alpha-D-ribose 1-phosphate = 2-deoxy-D-ribose 5-phosphate. It catalyses the reaction alpha-D-ribose 1-phosphate = D-ribose 5-phosphate. Its pathway is carbohydrate degradation; 2-deoxy-D-ribose 1-phosphate degradation; D-glyceraldehyde 3-phosphate and acetaldehyde from 2-deoxy-alpha-D-ribose 1-phosphate: step 1/2. Isomerase that catalyzes the conversion of deoxy-ribose 1-phosphate (dRib-1-P) and ribose 1-phosphate (Rib-1-P) to deoxy-ribose 5-phosphate (dRib-5-P) and ribose 5-phosphate (Rib-5-P), respectively. This Streptococcus pyogenes serotype M12 (strain MGAS2096) protein is Phosphopentomutase.